Consider the following 379-residue polypeptide: Adenylosuccinate synthetase (379 aa).

GTP is bound by residues 11–17 and 39–41; these read GDEGKGK and GHT. Aspartate 12 acts as the Proton acceptor in catalysis. Residues aspartate 12 and glycine 39 each coordinate Mg(2+). IMP is bound by residues 12–15, 37–40, threonine 127, arginine 141, glutamine 223, threonine 238, and arginine 302; these read DEGK and NAGH. The Proton donor role is filled by histidine 40. 298–304 is a binding site for substrate; sequence TTTGRGR. Residues arginine 304 and 330-332 each bind GTP; that span reads KLD.

The protein belongs to the adenylosuccinate synthetase family. In terms of assembly, homodimer. It depends on Mg(2+) as a cofactor.

The protein localises to the cytoplasm. The enzyme catalyses IMP + L-aspartate + GTP = N(6)-(1,2-dicarboxyethyl)-AMP + GDP + phosphate + 2 H(+). The protein operates within purine metabolism; AMP biosynthesis via de novo pathway; AMP from IMP: step 1/2. Functionally, plays an important role in the de novo pathway of purine nucleotide biosynthesis. Catalyzes the first committed step in the biosynthesis of AMP from IMP. This is Adenylosuccinate synthetase from Methanosarcina mazei (strain ATCC BAA-159 / DSM 3647 / Goe1 / Go1 / JCM 11833 / OCM 88) (Methanosarcina frisia).